The primary structure comprises 362 residues: MTDMPTLDAIRQAPKALLHDHLDGGLRPETVLDIAGQVGYDGLPSTDAGELASWFRTQSHSGSLERYLEPFSHTVAVMQTPEALYRVAYECVEDLAADAVVYAEIRFAPELHINRGLTFDEIVDAVLAGFAAGERACAGAGCPIKVRLLVTAMRHAAMSREIAELAIRFRDKGVVGFDIAGAEAGYPPSRHLDAFEYMRDNNARFTIHAGEAFGLPSIHEAIAFCGADRLGHGVRIVDDIEVGLDGDVKLGRLAAILRDKRIPLELCPSSNVQTGAVASIAEHPFDLLARSRFRVTVNTDNRLMSDTSMSQEMYRLVETFGYGWSDIQRFTINAMKSAFIAFDERLEIIDEVIKPRFAVLIG.

Zn(2+)-binding residues include H19 and H21. Residues H21, D23, and G181 each contribute to the substrate site. H208 is a binding site for Zn(2+). The Proton donor role is filled by E211. D300 provides a ligand contact to Zn(2+).

Belongs to the metallo-dependent hydrolases superfamily. Adenosine and AMP deaminases family. Adenosine deaminase subfamily. It depends on Zn(2+) as a cofactor.

It carries out the reaction adenosine + H2O + H(+) = inosine + NH4(+). The enzyme catalyses 2'-deoxyadenosine + H2O + H(+) = 2'-deoxyinosine + NH4(+). Functionally, catalyzes the hydrolytic deamination of adenosine and 2-deoxyadenosine. The sequence is that of Adenosine deaminase from Mycobacterium ulcerans (strain Agy99).